We begin with the raw amino-acid sequence, 229 residues long: Large ribosomal subunit protein uL1 (229 aa).

It belongs to the universal ribosomal protein uL1 family. In terms of assembly, part of the 50S ribosomal subunit.

Its function is as follows. Binds directly to 23S rRNA. The L1 stalk is quite mobile in the ribosome, and is involved in E site tRNA release. Functionally, protein L1 is also a translational repressor protein, it controls the translation of the L11 operon by binding to its mRNA. The chain is Large ribosomal subunit protein uL1 from Caulobacter sp. (strain K31).